A 347-amino-acid chain; its full sequence is tRNA N6-adenosine threonylcarbamoyltransferase (347 aa).

2 residues coordinate Fe cation: histidine 115 and histidine 119. Substrate-binding positions include 137-141 (LASGG), aspartate 170, glycine 183, and asparagine 281. Residue aspartate 309 participates in Fe cation binding.

This sequence belongs to the KAE1 / TsaD family. The cofactor is Fe(2+).

It localises to the cytoplasm. The enzyme catalyses L-threonylcarbamoyladenylate + adenosine(37) in tRNA = N(6)-L-threonylcarbamoyladenosine(37) in tRNA + AMP + H(+). Functionally, required for the formation of a threonylcarbamoyl group on adenosine at position 37 (t(6)A37) in tRNAs that read codons beginning with adenine. Is involved in the transfer of the threonylcarbamoyl moiety of threonylcarbamoyl-AMP (TC-AMP) to the N6 group of A37, together with TsaE and TsaB. TsaD likely plays a direct catalytic role in this reaction. The protein is tRNA N6-adenosine threonylcarbamoyltransferase of Methylorubrum populi (strain ATCC BAA-705 / NCIMB 13946 / BJ001) (Methylobacterium populi).